Here is a 372-residue protein sequence, read N- to C-terminus: Oxysterol-binding protein 3 (372 aa).

A compositionally biased stretch (basic and acidic residues) spans 1–10 (MGKSDRKLTE). Residues 1–25 (MGKSDRKLTEENSIENGVKPGKLTE) form a disordered region.

It belongs to the OSBP family.

The protein is Oxysterol-binding protein 3 (osbC) of Dictyostelium discoideum (Social amoeba).